Consider the following 137-residue polypeptide: Nucleoside diphosphate kinase (137 aa).

Residues K11, F59, R87, T93, R104, and N114 each coordinate ATP. The active-site Pros-phosphohistidine intermediate is the H117.

This sequence belongs to the NDK family. Homotetramer. Mg(2+) is required as a cofactor.

It is found in the cytoplasm. The catalysed reaction is a 2'-deoxyribonucleoside 5'-diphosphate + ATP = a 2'-deoxyribonucleoside 5'-triphosphate + ADP. The enzyme catalyses a ribonucleoside 5'-diphosphate + ATP = a ribonucleoside 5'-triphosphate + ADP. In terms of biological role, major role in the synthesis of nucleoside triphosphates other than ATP. The ATP gamma phosphate is transferred to the NDP beta phosphate via a ping-pong mechanism, using a phosphorylated active-site intermediate. This Parafrankia sp. (strain EAN1pec) protein is Nucleoside diphosphate kinase.